Reading from the N-terminus, the 212-residue chain is Transcription antitermination protein NusB (212 aa).

Disordered stretches follow at residues 1–34 (MSDEQSTPASGRPPRQSRGGLTSTGARKAASKSN) and 169–212 (EHDR…QAAG). A compositionally biased stretch (low complexity) spans 178-212 (APAQPAAKADTATDAVADAATDAAAADDAADQAAG).

Belongs to the NusB family.

Its function is as follows. Involved in transcription antitermination. Required for transcription of ribosomal RNA (rRNA) genes. Binds specifically to the boxA antiterminator sequence of the ribosomal RNA (rrn) operons. This chain is Transcription antitermination protein NusB, found in Delftia acidovorans (strain DSM 14801 / SPH-1).